The chain runs to 284 residues: Formamidopyrimidine-DNA glycosylase (284 aa).

The active-site Schiff-base intermediate with DNA is the Pro-2. Glu-3 functions as the Proton donor in the catalytic mechanism. The Proton donor; for beta-elimination activity role is filled by Lys-59. 2 residues coordinate DNA: His-94 and Arg-113. The segment at 239 to 273 (KVHTKKDQPCSVCNQLIVKKKINGRGSYFCLNCQK) adopts an FPG-type zinc-finger fold. The active-site Proton donor; for delta-elimination activity is the Arg-263.

This sequence belongs to the FPG family. Monomer. The cofactor is Zn(2+).

The enzyme catalyses Hydrolysis of DNA containing ring-opened 7-methylguanine residues, releasing 2,6-diamino-4-hydroxy-5-(N-methyl)formamidopyrimidine.. It carries out the reaction 2'-deoxyribonucleotide-(2'-deoxyribose 5'-phosphate)-2'-deoxyribonucleotide-DNA = a 3'-end 2'-deoxyribonucleotide-(2,3-dehydro-2,3-deoxyribose 5'-phosphate)-DNA + a 5'-end 5'-phospho-2'-deoxyribonucleoside-DNA + H(+). Functionally, involved in base excision repair of DNA damaged by oxidation or by mutagenic agents. Acts as a DNA glycosylase that recognizes and removes damaged bases. Has a preference for oxidized purines, such as 7,8-dihydro-8-oxoguanine (8-oxoG). Has AP (apurinic/apyrimidinic) lyase activity and introduces nicks in the DNA strand. Cleaves the DNA backbone by beta-delta elimination to generate a single-strand break at the site of the removed base with both 3'- and 5'-phosphates. This is Formamidopyrimidine-DNA glycosylase (mutM) from Mycoplasma genitalium (strain ATCC 33530 / DSM 19775 / NCTC 10195 / G37) (Mycoplasmoides genitalium).